Consider the following 113-residue polypeptide: Large ribosomal subunit protein uL22 (113 aa).

The protein belongs to the universal ribosomal protein uL22 family. In terms of assembly, part of the 50S ribosomal subunit.

Its function is as follows. This protein binds specifically to 23S rRNA; its binding is stimulated by other ribosomal proteins, e.g. L4, L17, and L20. It is important during the early stages of 50S assembly. It makes multiple contacts with different domains of the 23S rRNA in the assembled 50S subunit and ribosome. In terms of biological role, the globular domain of the protein is located near the polypeptide exit tunnel on the outside of the subunit, while an extended beta-hairpin is found that lines the wall of the exit tunnel in the center of the 70S ribosome. This chain is Large ribosomal subunit protein uL22, found in Xanthomonas oryzae pv. oryzae (strain MAFF 311018).